Consider the following 638-residue polypeptide: 1-deoxy-D-xylulose-5-phosphate synthase (638 aa).

Thiamine diphosphate contacts are provided by residues His-79 and 120–122 (AHS). Asp-151 contributes to the Mg(2+) binding site. Thiamine diphosphate contacts are provided by residues 152-153 (GA), Asn-180, Tyr-289, and Glu-371. Asn-180 is a Mg(2+) binding site.

This sequence belongs to the transketolase family. DXPS subfamily. In terms of assembly, homodimer. Requires Mg(2+) as cofactor. It depends on thiamine diphosphate as a cofactor.

It carries out the reaction D-glyceraldehyde 3-phosphate + pyruvate + H(+) = 1-deoxy-D-xylulose 5-phosphate + CO2. It participates in metabolic intermediate biosynthesis; 1-deoxy-D-xylulose 5-phosphate biosynthesis; 1-deoxy-D-xylulose 5-phosphate from D-glyceraldehyde 3-phosphate and pyruvate: step 1/1. Its function is as follows. Catalyzes the acyloin condensation reaction between C atoms 2 and 3 of pyruvate and glyceraldehyde 3-phosphate to yield 1-deoxy-D-xylulose-5-phosphate (DXP). The sequence is that of 1-deoxy-D-xylulose-5-phosphate synthase from Rhizobium etli (strain CIAT 652).